The sequence spans 194 residues: ATP-dependent Clp protease proteolytic subunit (194 aa).

Residue S99 is the Nucleophile of the active site. H124 is an active-site residue.

The protein belongs to the peptidase S14 family. Fourteen ClpP subunits assemble into 2 heptameric rings which stack back to back to give a disk-like structure with a central cavity, resembling the structure of eukaryotic proteasomes.

Its subcellular location is the cytoplasm. The enzyme catalyses Hydrolysis of proteins to small peptides in the presence of ATP and magnesium. alpha-casein is the usual test substrate. In the absence of ATP, only oligopeptides shorter than five residues are hydrolyzed (such as succinyl-Leu-Tyr-|-NHMec, and Leu-Tyr-Leu-|-Tyr-Trp, in which cleavage of the -Tyr-|-Leu- and -Tyr-|-Trp bonds also occurs).. Cleaves peptides in various proteins in a process that requires ATP hydrolysis. Has a chymotrypsin-like activity. Plays a major role in the degradation of misfolded proteins. The polypeptide is ATP-dependent Clp protease proteolytic subunit (Clostridium perfringens (strain ATCC 13124 / DSM 756 / JCM 1290 / NCIMB 6125 / NCTC 8237 / Type A)).